The following is a 116-amino-acid chain: Methionine-R-sulfoxide reductase B1 (116 aa).

The MsrB domain occupies 1–106 (MSFCSFFGGE…FSSSLKFVPK (106 aa)). Zn(2+)-binding residues include C23, C26, C71, and C74. U95 functions as the Nucleophile in the catalytic mechanism. Position 95 (U95) is a non-standard amino acid, selenocysteine.

This sequence belongs to the MsrB Met sulfoxide reductase family. Zn(2+) serves as cofactor. Truncated MSRB1/SEPX1 proteins produced by failed UGA/Sec decoding are ubiquitinated by the CRL2(FEM1C) E3 ubiquitin-protein ligase complex.

The protein localises to the cytoplasm. Its subcellular location is the nucleus. It localises to the cytoskeleton. It carries out the reaction L-methionyl-[protein] + [thioredoxin]-disulfide + H2O = L-methionyl-(R)-S-oxide-[protein] + [thioredoxin]-dithiol. It catalyses the reaction [thioredoxin]-disulfide + L-methionine + H2O = L-methionine (R)-S-oxide + [thioredoxin]-dithiol. Functionally, methionine-sulfoxide reductase that specifically reduces methionine (R)-sulfoxide back to methionine. While in many cases, methionine oxidation is the result of random oxidation following oxidative stress, methionine oxidation is also a post-translational modification that takes place on specific residue. Acts as a regulator of actin assembly by reducing methionine (R)-sulfoxide mediated by MICALs (MICAL1, MICAL2 or MICAL3) on actin, thereby promoting filament repolymerization. Plays a role in innate immunity by reducing oxidized actin, leading to actin repolymerization in macrophages. In Mus musculus (Mouse), this protein is Methionine-R-sulfoxide reductase B1 (Msrb1).